Reading from the N-terminus, the 1539-residue chain is Lysine-specific demethylase 5D (1539 aa).

The region spanning Cys-14–Pro-55 is the JmjN domain. In terms of domain architecture, ARID spans Thr-79–Ser-169. The interval Pro-192–Glu-228 is disordered. Polar residues predominate over residues Leu-197 to Ser-210. Glycyl lysine isopeptide (Lys-Gly) (interchain with G-Cter in SUMO2) cross-links involve residues Lys-205, Lys-229, Lys-244, and Lys-272. Ser-291 and Ser-307 each carry phosphoserine. Residues Ile-316 to Ile-362 form a PHD-type 1 zinc finger. A 2-oxoglutarate-binding site is contributed by Tyr-430. Residues Glu-458–Arg-624 form the JmjC domain. Fe cation is bound by residues His-504 and Glu-506. The 2-oxoglutarate site is built by Ser-512, Asn-514, and Lys-522. A Fe cation-binding site is contributed by His-592. A C5HC2 zinc finger spans residues Cys-697–Met-749. Phosphoserine is present on Ser-884. A PHD-type 2 zinc finger spans residues Ile-1174–Met-1235. Ser-1346 is subject to Phosphoserine. The segment at His-1429–Ala-1521 is disordered. Positions Ser-1432–Gln-1446 are enriched in basic residues. The segment covering Gly-1477–Asn-1491 has biased composition (basic and acidic residues). Positions Leu-1494 to Ala-1521 are enriched in polar residues.

This sequence belongs to the JARID1 histone demethylase family. As to quaternary structure, interacts with PCGF6, MSH5, ZMYND8, AR. L-ascorbate is required as a cofactor. Requires Fe(2+) as cofactor. In terms of tissue distribution, expression is highly down-regulated in metastatic prostate tumors.

It localises to the nucleus. The enzyme catalyses N(6),N(6),N(6)-trimethyl-L-lysyl(4)-[histone H3] + 3 2-oxoglutarate + 3 O2 = L-lysyl(4)-[histone H3] + 3 formaldehyde + 3 succinate + 3 CO2. Histone demethylase that specifically demethylates 'Lys-4' of histone H3, thereby playing a central role in histone code. Does not demethylate histone H3 'Lys-9', H3 'Lys-27', H3 'Lys-36', H3 'Lys-79' or H4 'Lys-20'. Demethylates trimethylated and dimethylated but not monomethylated H3 'Lys-4'. May play a role in spermatogenesis. Involved in transcriptional repression of diverse metastasis-associated genes; in this function seems to cooperate with ZMYND8. Suppresses prostate cancer cell invasion. Regulates androgen receptor (AR) transcriptional activity by demethylating H3K4me3 active transcription marks. The sequence is that of Lysine-specific demethylase 5D (KDM5D) from Homo sapiens (Human).